Consider the following 268-residue polypeptide: Ribosomal RNA small subunit methyltransferase A (268 aa).

6 residues coordinate S-adenosyl-L-methionine: N11, L13, G37, E58, D86, and N104.

Belongs to the class I-like SAM-binding methyltransferase superfamily. rRNA adenine N(6)-methyltransferase family. RsmA subfamily.

Its subcellular location is the cytoplasm. It catalyses the reaction adenosine(1518)/adenosine(1519) in 16S rRNA + 4 S-adenosyl-L-methionine = N(6)-dimethyladenosine(1518)/N(6)-dimethyladenosine(1519) in 16S rRNA + 4 S-adenosyl-L-homocysteine + 4 H(+). Its function is as follows. Specifically dimethylates two adjacent adenosines (A1518 and A1519) in the loop of a conserved hairpin near the 3'-end of 16S rRNA in the 30S particle. May play a critical role in biogenesis of 30S subunits. This is Ribosomal RNA small subunit methyltransferase A from Campylobacter fetus subsp. fetus (strain 82-40).